The primary structure comprises 664 residues: Transketolase 1 (664 aa).

His26 lines the substrate pocket. Thiamine diphosphate is bound by residues His66 and 114-116; that span reads GPL. Asp155 contributes to the Mg(2+) binding site. Residues Gly156 and Asn185 each coordinate thiamine diphosphate. Mg(2+) is bound by residues Asn185 and Ile187. Positions 260, 357, and 384 each coordinate substrate. His260 provides a ligand contact to thiamine diphosphate. Catalysis depends on Glu411, which acts as the Proton donor. Phe437 contributes to the thiamine diphosphate binding site. Substrate contacts are provided by His461, Asp469, and Arg520.

This sequence belongs to the transketolase family. Homodimer. Requires Mg(2+) as cofactor. Ca(2+) serves as cofactor. It depends on Mn(2+) as a cofactor. Co(2+) is required as a cofactor. The cofactor is thiamine diphosphate.

It carries out the reaction D-sedoheptulose 7-phosphate + D-glyceraldehyde 3-phosphate = aldehydo-D-ribose 5-phosphate + D-xylulose 5-phosphate. Catalyzes the transfer of a two-carbon ketol group from a ketose donor to an aldose acceptor, via a covalent intermediate with the cofactor thiamine pyrophosphate. The chain is Transketolase 1 (tkt1) from Vibrio parahaemolyticus serotype O3:K6 (strain RIMD 2210633).